The chain runs to 147 residues: Protein phosphatase 1 regulatory subunit 14B (147 aa).

Over residues 1–15 (MADSGPAGGAALAAP) the composition is skewed to low complexity. A disordered region spans residues 1-55 (MADSGPAGGAALAAPAPGPGSGSTGPRVYFQSPPGAAGEGPGGADDDGPVRRQGK). Ala2 is subject to N-acetylalanine. A Phosphoserine modification is found at Ser21. The residue at position 29 (Tyr29) is a Phosphotyrosine. At Ser32 the chain carries Phosphoserine. Position 57 is a phosphothreonine (Thr57). Positions 61–103 (DRKELRKRLNLEEWILEQLTRLYDCQEEEIPELEIDVDELLDM) form a coiled coil.

This sequence belongs to the PP1 inhibitor family. In terms of processing, phosphorylated primarily on Thr-57 by PKC (in vitro). An unknown Ser is also phosphorylated by PKC (in vitro). Ubiquitous. Highly expressed in testis. Detected at low levels in the other tissues tested. Highly expressed in cardiac muscle, bladder and aorta (at protein level).

The protein resides in the cytoplasm. In terms of biological role, inhibitor of PPP1CA. Has over 50-fold higher inhibitory activity when phosphorylated. This is Protein phosphatase 1 regulatory subunit 14B (Ppp1r14b) from Mus musculus (Mouse).